The following is a 299-amino-acid chain: J domain-containing protein CG6693 (299 aa).

Residues 15–82 form the J domain; the sequence is DVYKLMELAR…QKRALYDEQG (68 aa). S239 carries the post-translational modification Phosphoserine. Residues 266 to 299 are disordered; that stretch reads FEKKKKKSKKPAAKQETKPKLNGVKAGRVEKGKN. A compositionally biased stretch (basic residues) spans 268–277; that stretch reads KKKKKSKKPA.

This Drosophila melanogaster (Fruit fly) protein is J domain-containing protein CG6693.